Consider the following 581-residue polypeptide: Probable peptidoglycan D,D-transpeptidase PenA (581 aa).

A helical transmembrane segment spans residues 28–48 (ISFVLMAMAVLFACLIARGLY). The active-site Acyl-ester intermediate is the Ser310.

This sequence belongs to the transpeptidase family. FtsI subfamily.

The protein resides in the cell inner membrane. It catalyses the reaction Preferential cleavage: (Ac)2-L-Lys-D-Ala-|-D-Ala. Also transpeptidation of peptidyl-alanyl moieties that are N-acyl substituents of D-alanine.. Its pathway is cell wall biogenesis; peptidoglycan biosynthesis. Functionally, catalyzes cross-linking of the peptidoglycan cell wall at the division septum. The sequence is that of Probable peptidoglycan D,D-transpeptidase PenA from Neisseria gonorrhoeae.